A 302-amino-acid chain; its full sequence is Protein MGF 110-11L (302 aa).

The helical transmembrane segment at 26-46 (PFGCNMKGLGVLLGLFSLILA) threads the bilayer. N-linked (GlcNAc...) asparagine; by host glycosylation is present at N97. Helical transmembrane passes span 154 to 174 (LTLK…GCFV) and 183 to 203 (LNTT…AQPV). A glycan (N-linked (GlcNAc...) asparagine; by host) is linked at N294.

It belongs to the asfivirus MGF 110 family.

The protein resides in the host membrane. Plays a role in virus cell tropism, and may be required for efficient virus replication in macrophages. This is Protein MGF 110-11L from African swine fever virus (isolate Tick/South Africa/Pretoriuskop Pr4/1996) (ASFV).